Consider the following 178-residue polypeptide: Extracellular fatty acid-binding protein (178 aa).

An N-terminal signal peptide occupies residues 1–20 (MRTLALSLALALLCLLHTEA). A Blocked amino end (Ala) modification is found at A21. An enterobactin-binding site is contributed by T43. 1-tetradecanoyl-sn-glycerol 3-phosphate contacts are provided by Y72 and K104. A disulfide bridge links C80 with C173. Enterobactin-binding residues include K104, R123, and R134. 134–136 (RLY) contributes to the 1-tetradecanoyl-sn-glycerol 3-phosphate binding site.

Belongs to the calycin superfamily. Lipocalin family. Monomer. In terms of processing, does not seem to be glycosylated. In terms of tissue distribution, expressed in egg white (at protein level). Expressed in the magnum of the oviduct (at protein level). Preferentially synthesized in nonproliferating cells.

Its subcellular location is the secreted. Functionally, siderocalin-like lipocalin tightly binding a variety of bacterial ferric siderophores, also binds long-chain unsaturated fatty acids such as linoleic acid, oleic acid, arachidonic acid and, with a lower affinity, long chain saturated fatty acids such as steraic acid. May act as an antibacterial factor, through dual ligand specificity, both as a siderophore-sequestrating molecule and a lysophosphatidic acid (LPA) sensor. In Gallus gallus (Chicken), this protein is Extracellular fatty acid-binding protein (EXFABP).